The chain runs to 347 residues: Merozoite surface protein 2 (347 aa).

Positions 1–20 are cleaved as a signal peptide; the sequence is MKVIKTLSIINFFIFVTFNI. N-linked (GlcNAc...) asparagine glycans are attached at residues N22 and N36. The interval 44–273 is polymorphic region; that stretch reads AESKPPTGDG…EQTESPELQS (230 aa). 22 tandem repeats follow at residues 53–60, 61–68, 69–76, 77–84, 85–88, 89–92, 93–96, 97–100, 101–104, 105–108, 109–112, 113–116, 117–120, 121–124, 125–128, 129–132, 133–136, 137–140, 141–144, 145–152, 153–156, and 157–164. Residues 53 to 164 form a 6 X 8 AA repeats of G-A-V-A-S-A-G-N region; sequence GAVASAGNGA…GNGAVASAGN (112 aa). Residues 85–156 are 16 X 4 AA repeats of G-A-G-N; that stretch reads GAGNGAGNGA…VASAGNGAGN (72 aa). Low complexity predominate over residues 165–206; it reads GAVAERSSSTPATTTTTTTTNDAEASTSTSSENSNHNNAETN. The segment at 165–308 is disordered; it reads GAVAERSSST…DSQKECTDGN (144 aa). Composition is skewed to polar residues over residues 213–240 and 247–275; these read VQPNQANKETQNNSNVQQDSQTKSNVPR and KSPTAQPEQAENSAPTAEQTESPELQSAP. N-linked (GlcNAc...) asparagine glycosylation occurs at N224. N296 is a glycosylation site (N-linked (GlcNAc...) asparagine). A disulfide bridge connects residues C304 and C312. N-linked (GlcNAc...) asparagine glycans are attached at residues N320 and N321. N321 carries GPI-anchor amidated asparagine lipidation. Positions 322–347 are cleaved as a propeptide — removed in mature form; the sequence is SSNIASINKFVVLISATLVLSFAIFI.

It is found in the cell membrane. May play a role in the merozoite attachment to the erythrocyte. The polypeptide is Merozoite surface protein 2 (Plasmodium falciparum (isolate Nig32 / Nigeria)).